Here is a 70-residue protein sequence, read N- to C-terminus: Cytoinsectotoxin-2c (70 aa).

The protein belongs to the cationic peptide 06 (cytoinsectotoxin) family. Expressed by the venom gland.

It localises to the secreted. Its function is as follows. Insecticidal and antimicrobial peptide. Has insecticidal activity against larvae of flesh fly S.carnaria. Has antibacterial activity against Gram-positive bacterium B.subtilis B-501 (MIC=1.25 uM) and Gram-negative bacterium E.coli DH5alpha (MIC=2.5 uM). In Lachesana tarabaevi (Spider), this protein is Cytoinsectotoxin-2c.